We begin with the raw amino-acid sequence, 414 residues long: Glutamyl-tRNA reductase (414 aa).

Residues Thr-49–Arg-52, Ser-108, Glu-113–Gln-115, and Gln-119 each bind substrate. Cys-50 functions as the Nucleophile in the catalytic mechanism. Gly-188–Gly-193 is an NADP(+) binding site.

It belongs to the glutamyl-tRNA reductase family. Homodimer.

The catalysed reaction is (S)-4-amino-5-oxopentanoate + tRNA(Glu) + NADP(+) = L-glutamyl-tRNA(Glu) + NADPH + H(+). Its pathway is porphyrin-containing compound metabolism; protoporphyrin-IX biosynthesis; 5-aminolevulinate from L-glutamyl-tRNA(Glu): step 1/2. Catalyzes the NADPH-dependent reduction of glutamyl-tRNA(Glu) to glutamate 1-semialdehyde (GSA). In Francisella tularensis subsp. holarctica (strain FTNF002-00 / FTA), this protein is Glutamyl-tRNA reductase.